The sequence spans 207 residues: MIGRIRGVILEKQPPVVLIEAGNGVGYEINMPMTCFYELPDIGQEAIIYTQFIVREDAQLLYGFNQKQERALFRELIKVNGVGPKLALAILSGMSARQFVTAIENESISSLVKLPGVGKKTAERLVVEMKDRFKGLNGDLFEQNGDIELPASASSKAPSAADIEAEASAALIALGYKPQEAAKMISRVATAGADSETLIKEALRAAI.

Residues 1-65 form a domain I region; that stretch reads MIGRIRGVIL…EDAQLLYGFN (65 aa). Residues 66–143 form a domain II region; the sequence is QKQERALFRE…KGLNGDLFEQ (78 aa). The flexible linker stretch occupies residues 144 to 158; that stretch reads NGDIELPASASSKAP. Residues 159–207 are domain III; that stretch reads SAADIEAEASAALIALGYKPQEAAKMISRVATAGADSETLIKEALRAAI.

This sequence belongs to the RuvA family. In terms of assembly, homotetramer. Forms an RuvA(8)-RuvB(12)-Holliday junction (HJ) complex. HJ DNA is sandwiched between 2 RuvA tetramers; dsDNA enters through RuvA and exits via RuvB. An RuvB hexamer assembles on each DNA strand where it exits the tetramer. Each RuvB hexamer is contacted by two RuvA subunits (via domain III) on 2 adjacent RuvB subunits; this complex drives branch migration. In the full resolvosome a probable DNA-RuvA(4)-RuvB(12)-RuvC(2) complex forms which resolves the HJ.

It localises to the cytoplasm. In terms of biological role, the RuvA-RuvB-RuvC complex processes Holliday junction (HJ) DNA during genetic recombination and DNA repair, while the RuvA-RuvB complex plays an important role in the rescue of blocked DNA replication forks via replication fork reversal (RFR). RuvA specifically binds to HJ cruciform DNA, conferring on it an open structure. The RuvB hexamer acts as an ATP-dependent pump, pulling dsDNA into and through the RuvAB complex. HJ branch migration allows RuvC to scan DNA until it finds its consensus sequence, where it cleaves and resolves the cruciform DNA. The chain is Holliday junction branch migration complex subunit RuvA from Proteus mirabilis (strain HI4320).